The primary structure comprises 212 residues: Nitrile hydratase subunit beta (212 aa).

Belongs to the nitrile hydratase subunit beta family. Heterodimer of an alpha and a beta chain.

It carries out the reaction an aliphatic primary amide = an aliphatic nitrile + H2O. In terms of biological role, NHase catalyzes the hydration of various nitrile compounds to the corresponding amides. The protein is Nitrile hydratase subunit beta (nthB) of Rhodococcus erythropolis (Arthrobacter picolinophilus).